The chain runs to 405 residues: PP2A regulatory subunit TAP46 (405 aa).

Disordered stretches follow at residues 159 to 189 (ERRG…SEEE) and 352 to 405 (ATTS…TPCG). The segment covering 165–174 (TKASALSTPV) has biased composition (polar residues). 2 stretches are compositionally biased toward acidic residues: residues 176–189 (SGED…SEEE) and 367–377 (EDEEDDDEDEE). Residues 378–393 (AVMKARAFDDWKDDNP) are compositionally biased toward basic and acidic residues.

It belongs to the IGBP1/TAP42 family. In terms of assembly, interacts with the 36 kDa catalytic subunit (subunit C) of PP2A. Interacts with PP2A1 and PP2A2. Interacts with PP2A3, PPX1 and FYPP1. Interacts with FYPP3 and ABI5. Interacts with ATPK1/S6K1 and ATPK2/S6K2. Interacts with TIP41L. Phosphorylated by TOR kinase in vitro. In terms of tissue distribution, ubiquitous. Highly expressed in seed, and particularly in the embryo.

In terms of biological role, involved in the positive regulation of the TOR signaling pathway. Acts as a negative regulator of PP2A catalytic activity. Plays a positive role in the ABA-regulated inhibition of germination, probably throught its interaction with ABI5. This Arabidopsis thaliana (Mouse-ear cress) protein is PP2A regulatory subunit TAP46.